The sequence spans 390 residues: Na(+)/H(+) antiporter NhaA 1 (390 aa).

11 helical membrane passes run Ser14–Leu34, Thr59–Leu79, Val94–Val114, Gly125–Gly145, Leu154–Phe174, Leu179–Tyr199, Ile205–His225, Pro260–Ser280, Ile295–Ile315, Trp328–Ile348, and Ala362–Leu382.

This sequence belongs to the NhaA Na(+)/H(+) (TC 2.A.33) antiporter family.

The protein resides in the cell inner membrane. It carries out the reaction Na(+)(in) + 2 H(+)(out) = Na(+)(out) + 2 H(+)(in). Functionally, na(+)/H(+) antiporter that extrudes sodium in exchange for external protons. This chain is Na(+)/H(+) antiporter NhaA 1, found in Campylobacter fetus subsp. fetus (strain 82-40).